Reading from the N-terminus, the 505-residue chain is ADP-ribosylarginine hydrolase CG2909 (505 aa).

ADP-D-ribose is bound by residues Arg198, Gly336, Gly338, Gly340, Val341, Trp342, Trp377, Asp432, Asn439, Glu440, Gly450, and Asp451.

It carries out the reaction N(omega)-(ADP-D-ribosyl)-L-arginyl-[protein] + H2O = ADP-D-ribose + L-arginyl-[protein]. It catalyses the reaction N(omega)-(ADP-D-ribosyl)-L-arginine + H2O = ADP-D-ribose + L-arginine. Functionally, protein ADP-ribosyl hydrolase that specifically removes mono-ADP-ribosyl modifications from protein arginine residues. This is ADP-ribosylarginine hydrolase CG2909 from Drosophila melanogaster (Fruit fly).